The sequence spans 453 residues: C4-dicarboxylate TRAP transporter large permease protein DctM (453 aa).

A run of 13 helical transmembrane segments spans residues 2 to 22, 50 to 70, 82 to 102, 104 to 124, 139 to 159, 172 to 192, 217 to 237, 243 to 263, 289 to 309, 326 to 346, 356 to 376, 380 to 400, and 417 to 437; these read AVALLFILVIGMMIVGVPIAI, AFAGHYTLLAIPFFILASTFM, FAIAMVGWFRGGLAIASVVAC, MFAALSGSSPATVVAIGSIVI, GVICNAGTLGILIPPSIVMVV, FLGGVVPGLLAGLMLIIAIYI, ASWGLLLVVIILGGIYGGIFT, AVAAVYSFFIANFIYRDMGPF, LYDAGKLTIMLMFIIANALIL, MLSAGLGPITFLIVVNLILLV, LLVIVAPLVFPIAIALGIDPI, IMMVVNMEIGMITPPVGLNLF, and ALPWVGVMFLFLIIVTYVPWV.

It belongs to the TRAP transporter large permease family. In terms of assembly, the complex comprises the extracytoplasmic solute receptor protein DctP, and the two transmembrane proteins DctQ and DctM.

It localises to the cell inner membrane. Its function is as follows. Part of the tripartite ATP-independent periplasmic (TRAP) transport system DctPQM involved in C4-dicarboxylates uptake. This is C4-dicarboxylate TRAP transporter large permease protein DctM from Vibrio cholerae serotype O1 (strain ATCC 39315 / El Tor Inaba N16961).